We begin with the raw amino-acid sequence, 308 residues long: Phenylcoumaran benzylic ether reductase 1 (308 aa).

NADP(+)-binding positions include 11-17 (GGTGYIG), Arg-36, and Arg-45. Residue Lys-133 is the Proton acceptor of the active site. Arg-137 is a binding site for NADP(+).

Belongs to the NmrA-type oxidoreductase family. Isoflavone reductase subfamily. Expressed in apical meristem and cotyledon veins of young seedlings. Expressed in vascular tissues of roots, leaves, stems and petals. Expressed in pollen grains. Expressed at low levels in cauline leaves and siliques.

The enzyme catalyses (-)-dehydrodiconiferyl alcohol + NADPH + H(+) = (S)-isodihydrodehydrodiconiferyl alcohol + NADP(+). It carries out the reaction (+)-dehydrodiconiferyl alcohol + NADPH + H(+) = (R)-isodihydrodehydrodiconiferyl alcohol + NADP(+). The catalysed reaction is (2R,3S)-dihydrodehydrodiconiferyl alcohol + NADPH + H(+) = (S)-tetrahydrodehydrodiconiferyl alcohol + NADP(+). It catalyses the reaction (2S,3R)-dihydrodehydrodiconiferyl alcohol + NADPH + H(+) = (R)-tetrahydrodehydrodiconiferyl alcohol + NADP(+). In terms of biological role, oxidoreductase involved in lignan biosynthesis. Catalyzes the NADPH-dependent reduction of phenylcoumaran benzylic ethers. Converts dehydrodiconiferyl alcohol (DDC) to isodihydrodehydrodiconiferyl alcohol (IDDDC), and dihydrodehydrodiconiferyl alcohol (DDDC) to tetrahydrodehydrodiconiferyl alcohol (TDDC). Plays an important role in the biosynthesis of secondary metabolites. In addition to the 8-5'-linked neolignan DDC, can reduce the 8-8'-linked lignans, pinoresinol, and lariciresinol, but with lower activities. In Arabidopsis thaliana (Mouse-ear cress), this protein is Phenylcoumaran benzylic ether reductase 1.